We begin with the raw amino-acid sequence, 477 residues long: Glutamyl-tRNA(Gln) amidotransferase subunit A (477 aa).

Residues Lys76 and Ser151 each act as charge relay system in the active site. The active-site Acyl-ester intermediate is Ser175.

The protein belongs to the amidase family. GatA subfamily. As to quaternary structure, heterotrimer of A, B and C subunits.

It catalyses the reaction L-glutamyl-tRNA(Gln) + L-glutamine + ATP + H2O = L-glutaminyl-tRNA(Gln) + L-glutamate + ADP + phosphate + H(+). Its function is as follows. Allows the formation of correctly charged Gln-tRNA(Gln) through the transamidation of misacylated Glu-tRNA(Gln) in organisms which lack glutaminyl-tRNA synthetase. The reaction takes place in the presence of glutamine and ATP through an activated gamma-phospho-Glu-tRNA(Gln). The protein is Glutamyl-tRNA(Gln) amidotransferase subunit A of Chlorobium phaeobacteroides (strain BS1).